A 288-amino-acid chain; its full sequence is Probable endonuclease 4 (288 aa).

Zn(2+)-binding residues include His75, His115, Glu153, Asp187, His190, His224, Asp237, His239, and Glu269.

Belongs to the AP endonuclease 2 family. Zn(2+) serves as cofactor.

The catalysed reaction is Endonucleolytic cleavage to 5'-phosphooligonucleotide end-products.. In terms of biological role, endonuclease IV plays a role in DNA repair. It cleaves phosphodiester bonds at apurinic or apyrimidinic (AP) sites, generating a 3'-hydroxyl group and a 5'-terminal sugar phosphate. In Chlamydia muridarum (strain MoPn / Nigg), this protein is Probable endonuclease 4.